Consider the following 224-residue polypeptide: Probable mitochondrial import inner membrane translocase subunit Tim17 4 (224 aa).

The next 3 helical transmembrane spans lie at Cys-16–Phe-36, Ala-60–Val-80, and Ala-115–Ile-135.

This sequence belongs to the Tim17/Tim22/Tim23 family. As to quaternary structure, component of the TIM23 complex at least composed of Tim23, Tim17 (Tim17a1, Tim17a2 or Tim17b1) and a Tim50. The complex interacts with the Tim44 component of the PAM complex.

The protein localises to the mitochondrion inner membrane. Functionally, essential component of the TIM23 complex, a complex that mediates the translocation of transit peptide-containing proteins across the mitochondrial inner membrane. In Drosophila melanogaster (Fruit fly), this protein is Probable mitochondrial import inner membrane translocase subunit Tim17 4 (Tim17a2).